A 350-amino-acid chain; its full sequence is Guanine nucleotide-binding protein G(t) subunit alpha-1 (350 aa).

Positions 1 to 21 (MGAGASAEEKHSRELEKKLKE) are disordered. The N-myristoyl glycine moiety is linked to residue glycine 2. Residues 7–21 (AEEKHSRELEKKLKE) are compositionally biased toward basic and acidic residues. The 323-residue stretch at 28–350 (RTVKLLLLGA…KENLKDCGLF (323 aa)) folds into the G-alpha domain. Residues 31 to 44 (KLLLLGAGESGKST) form a G1 motif region. GTP is bound at residue 36-43 (GAGESGKS). Serine 43 serves as a coordination point for Mg(2+). Tyrosine 142 is modified (phosphotyrosine). GTP-binding positions include aspartate 146, 171-177 (LRSRVKT), glycine 199, 265-268 (NKKD), and alanine 322. A G2 motif region spans residues 169–177 (DVLRSRVKT). Threonine 177 provides a ligand contact to Mg(2+). A G3 motif region spans residues 192 to 201 (FRMFDVGGQR). The G4 motif stretch occupies residues 261-268 (VLFLNKKD). Residues 320 to 325 (TCATDT) are G5 motif. Positions 340 to 350 (IKENLKDCGLF) are interaction with RHO.

Heterotrimeric G proteins are composed of 3 subunits alpha, beta and gamma. The alpha chain contains the guanine nucleotide binding site. Interacts with RHO. Interacts with RGS9 and PDE6G. Interacts (when myristoylated) with UNC119; interaction is required for localization in sensory neurons. In terms of tissue distribution, rod.

The protein localises to the cell projection. Its subcellular location is the cilium. The protein resides in the photoreceptor outer segment. It localises to the membrane. It is found in the photoreceptor inner segment. Its function is as follows. Functions as a signal transducer for the rod photoreceptor RHO. Required for normal RHO-mediated light perception by the retina. Guanine nucleotide-binding proteins (G proteins) function as transducers downstream of G protein-coupled receptors (GPCRs), such as the photoreceptor RHO. The alpha chain contains the guanine nucleotide binding site and alternates between an active, GTP-bound state and an inactive, GDP-bound state. Activated RHO promotes GDP release and GTP binding. Signaling is mediated via downstream effector proteins, such as cGMP-phosphodiesterase. The chain is Guanine nucleotide-binding protein G(t) subunit alpha-1 (GNAT1) from Bos taurus (Bovine).